A 540-amino-acid polypeptide reads, in one-letter code: Alanine aminotransferase 2, mitochondrial (540 aa).

The transit peptide at 1–46 directs the protein to the mitochondrion; that stretch reads MRRFLINQAKGLVDHSRRQHHHKSPSFLSPQPRPLASSPPALSRFF. A disordered region spans residues 11-40; sequence GLVDHSRRQHHHKSPSFLSPQPRPLASSPP. Residues 28–40 are compositionally biased toward low complexity; it reads LSPQPRPLASSPP. An N6-(pyridoxal phosphate)lysine modification is found at Lys357.

This sequence belongs to the class-I pyridoxal-phosphate-dependent aminotransferase family. Alanine aminotransferase subfamily. As to quaternary structure, homodimer. It depends on pyridoxal 5'-phosphate as a cofactor. In terms of processing, the N-terminus is blocked. As to expression, expressed in shoots, essentially in leaves and flowers, mostly in vascular tissues. Also detected in stems and roots.

The protein resides in the mitochondrion. The catalysed reaction is L-alanine + 2-oxoglutarate = pyruvate + L-glutamate. Its pathway is photosynthesis; C4 acid pathway. The protein operates within amino-acid degradation; L-alanine degradation via transaminase pathway; pyruvate from L-alanine: step 1/1. The polypeptide is Alanine aminotransferase 2, mitochondrial (ALAAT2) (Arabidopsis thaliana (Mouse-ear cress)).